The primary structure comprises 273 residues: Light-independent protochlorophyllide reductase iron-sulfur ATP-binding protein (273 aa).

ATP is bound by residues 12–17 and Lys-41; that span reads GIGKST. Residue Ser-16 coordinates Mg(2+). Residues Cys-97 and Cys-131 each contribute to the [4Fe-4S] cluster site. Position 182 to 183 (182 to 183) interacts with ATP; that stretch reads NR.

This sequence belongs to the NifH/BchL/ChlL family. As to quaternary structure, homodimer. Protochlorophyllide reductase is composed of three subunits; BchL, BchN and BchB. [4Fe-4S] cluster serves as cofactor.

The catalysed reaction is chlorophyllide a + oxidized 2[4Fe-4S]-[ferredoxin] + 2 ADP + 2 phosphate = protochlorophyllide a + reduced 2[4Fe-4S]-[ferredoxin] + 2 ATP + 2 H2O. It functions in the pathway porphyrin-containing compound metabolism; bacteriochlorophyll biosynthesis (light-independent). Component of the dark-operative protochlorophyllide reductase (DPOR) that uses Mg-ATP and reduced ferredoxin to reduce ring D of protochlorophyllide (Pchlide) to form chlorophyllide a (Chlide). This reaction is light-independent. The L component serves as a unique electron donor to the NB-component of the complex, and binds Mg-ATP. The sequence is that of Light-independent protochlorophyllide reductase iron-sulfur ATP-binding protein from Roseiflexus sp. (strain RS-1).